Reading from the N-terminus, the 427-residue chain is Serine--tRNA ligase (427 aa).

L-serine is bound at residue 236-238; it reads TAE. Residue 267-269 coordinates ATP; it reads RRE. L-serine is bound at residue glutamate 290. 354 to 357 provides a ligand contact to ATP; that stretch reads EISS. Serine 390 provides a ligand contact to L-serine.

This sequence belongs to the class-II aminoacyl-tRNA synthetase family. Type-1 seryl-tRNA synthetase subfamily. In terms of assembly, homodimer. The tRNA molecule binds across the dimer.

It localises to the cytoplasm. It carries out the reaction tRNA(Ser) + L-serine + ATP = L-seryl-tRNA(Ser) + AMP + diphosphate + H(+). The catalysed reaction is tRNA(Sec) + L-serine + ATP = L-seryl-tRNA(Sec) + AMP + diphosphate + H(+). The protein operates within aminoacyl-tRNA biosynthesis; selenocysteinyl-tRNA(Sec) biosynthesis; L-seryl-tRNA(Sec) from L-serine and tRNA(Sec): step 1/1. Functionally, catalyzes the attachment of serine to tRNA(Ser). Is also able to aminoacylate tRNA(Sec) with serine, to form the misacylated tRNA L-seryl-tRNA(Sec), which will be further converted into selenocysteinyl-tRNA(Sec). The polypeptide is Serine--tRNA ligase (Rippkaea orientalis (strain PCC 8801 / RF-1) (Cyanothece sp. (strain PCC 8801))).